A 352-amino-acid chain; its full sequence is Uroporphyrinogen decarboxylase (352 aa).

Residues 26-30, phenylalanine 45, aspartate 76, tyrosine 153, serine 208, and histidine 323 contribute to the substrate site; that span reads RQAGR.

It belongs to the uroporphyrinogen decarboxylase family. Homodimer.

The protein localises to the cytoplasm. The enzyme catalyses uroporphyrinogen III + 4 H(+) = coproporphyrinogen III + 4 CO2. It participates in porphyrin-containing compound metabolism; protoporphyrin-IX biosynthesis; coproporphyrinogen-III from 5-aminolevulinate: step 4/4. Functionally, catalyzes the decarboxylation of four acetate groups of uroporphyrinogen-III to yield coproporphyrinogen-III. The polypeptide is Uroporphyrinogen decarboxylase (Prochlorococcus marinus (strain MIT 9313)).